A 292-amino-acid chain; its full sequence is MDLPRLYVPATLANLGSGFDALGVALDLYLEVEAHPAPEDAFLYEGEGHVEGTDNLIHEGYRAGMRALGLEPFPLRVRAFNPIPLARGMGSSSAALVAGVALADRLSGGRLGREGVFRVAAGLEGHPDNVAPAVFGGFVAALSDPPLAIPLPRPEGVRFVLAVPPYEVPTPLAREALPREVPLEDAIYNLARSALWPAALSSGKLEALREACRDRLHQPHRAPLMPGVLEAIEGALEAGALAAFVGGAGPTLAALARAGEEAPVIRALSAYRGPEGRTLVLGIGEGYFWKET.

Pro84–Ala94 is a binding site for ATP.

This sequence belongs to the GHMP kinase family. Homoserine kinase subfamily.

It is found in the cytoplasm. The enzyme catalyses L-homoserine + ATP = O-phospho-L-homoserine + ADP + H(+). It functions in the pathway amino-acid biosynthesis; L-threonine biosynthesis; L-threonine from L-aspartate: step 4/5. Catalyzes the ATP-dependent phosphorylation of L-homoserine to L-homoserine phosphate. The sequence is that of Homoserine kinase from Thermus thermophilus (strain ATCC BAA-163 / DSM 7039 / HB27).